Consider the following 293-residue polypeptide: Haloalkane dehalogenase (293 aa).

The AB hydrolase-1 domain maps to 34 to 158 (PVLFLHGNPT…FQAFRTADVG (125 aa)). Aspartate 106 (nucleophile) is an active-site residue. Catalysis depends on glutamate 130, which acts as the Proton donor. The active-site Proton acceptor is histidine 272.

It belongs to the haloalkane dehalogenase family. Type 2 subfamily. In terms of assembly, monomer.

It catalyses the reaction 1-haloalkane + H2O = a halide anion + a primary alcohol + H(+). It participates in xenobiotic degradation; haloalkane degradation. The protein operates within xenobiotic degradation; 1,3-dichloropropene degradation. Its function is as follows. Catalyzes hydrolytic cleavage of carbon-halogen bonds in halogenated aliphatic compounds, leading to the formation of the corresponding primary alcohols, halide ions and protons. Has a broad substrate specificity, as it is able to dehalogenate mono- and di- chlorinated and brominated alkanes (up to at least C10), and the two isomers of 1,3-dichloropropene to 3-chloroallyl alcohol; the highest activity was found with 1,2-dibromoethane, while no activity was observed with the analog 1,2-dichloroethane. This Pseudomonas pavonaceae protein is Haloalkane dehalogenase (dhaA).